The primary structure comprises 204 residues: Glycerol-3-phosphate acyltransferase (204 aa).

5 consecutive transmembrane segments (helical) span residues 8 to 28 (ILIF…CYIF), 53 to 73 (VLAA…VVIA), 81 to 101 (FITA…IFFG), 116 to 136 (FGFS…VAII), and 155 to 175 (VIFT…IIIL).

Belongs to the PlsY family. As to quaternary structure, probably interacts with PlsX.

The protein localises to the cell inner membrane. The catalysed reaction is an acyl phosphate + sn-glycerol 3-phosphate = a 1-acyl-sn-glycero-3-phosphate + phosphate. It participates in lipid metabolism; phospholipid metabolism. Its function is as follows. Catalyzes the transfer of an acyl group from acyl-phosphate (acyl-PO(4)) to glycerol-3-phosphate (G3P) to form lysophosphatidic acid (LPA). This enzyme utilizes acyl-phosphate as fatty acyl donor, but not acyl-CoA or acyl-ACP. The protein is Glycerol-3-phosphate acyltransferase of Francisella tularensis subsp. holarctica (strain OSU18).